The primary structure comprises 126 residues: Small ribosomal subunit protein uS13 (126 aa).

The segment at 98-126 (PLRGQSTKNNARTRKGKKKTVANKKKATK) is disordered. Residues 108–126 (ARTRKGKKKTVANKKKATK) show a composition bias toward basic residues.

Belongs to the universal ribosomal protein uS13 family. As to quaternary structure, part of the 30S ribosomal subunit. Forms a loose heterodimer with protein S19. Forms two bridges to the 50S subunit in the 70S ribosome.

In terms of biological role, located at the top of the head of the 30S subunit, it contacts several helices of the 16S rRNA. In the 70S ribosome it contacts the 23S rRNA (bridge B1a) and protein L5 of the 50S subunit (bridge B1b), connecting the 2 subunits; these bridges are implicated in subunit movement. Contacts the tRNAs in the A and P-sites. The protein is Small ribosomal subunit protein uS13 of Parabacteroides distasonis (strain ATCC 8503 / DSM 20701 / CIP 104284 / JCM 5825 / NCTC 11152).